Reading from the N-terminus, the 805-residue chain is Leucine--tRNA ligase (805 aa).

The short motif at 40-51 (PYPSGAGLHVGH) is the 'HIGH' region element. The 'KMSKS' region motif lies at 576 to 580 (KMSKS). An ATP-binding site is contributed by K579.

It belongs to the class-I aminoacyl-tRNA synthetase family.

Its subcellular location is the cytoplasm. It carries out the reaction tRNA(Leu) + L-leucine + ATP = L-leucyl-tRNA(Leu) + AMP + diphosphate. In Geobacillus thermodenitrificans (strain NG80-2), this protein is Leucine--tRNA ligase.